Reading from the N-terminus, the 763-residue chain is Forkhead box protein M1 (763 aa).

Residues 1–53 form a disordered region; it reads MKTSPRRPLILKRRRLPLPVQNAPSETSEEEPKRSPAQQESNQAEASKEVAES. Residues 36 to 45 are compositionally biased toward polar residues; the sequence is PAQQESNQAE. Residues K163, K201, and K325 each participate in a glycyl lysine isopeptide (Lys-Gly) (interchain with G-Cter in SUMO2) cross-link. The tract at residues 198-232 is disordered; it reads RSIKQEMEEKENCHLEQRQVKVEEPSRPSASWQNS. Residues 200–223 are compositionally biased toward basic and acidic residues; sequence IKQEMEEKENCHLEQRQVKVEEPS. A DNA-binding region (fork-head) is located at residues 235-327; the sequence is ERPPYSYMAM…LTLDQVFKPL (93 aa). The tract at residues 329-351 is disordered; it reads PGSPQLPEHLESQQKRPNPELRR. S331 carries the post-translational modification Phosphoserine. Positions 336 to 351 are enriched in basic and acidic residues; sequence EHLESQQKRPNPELRR. K356 is covalently cross-linked (Glycyl lysine isopeptide (Lys-Gly) (interchain with G-Cter in SUMO2)). Position 376 is a phosphoserine; by CHEK2 (S376). Residues K422 and K440 each participate in a glycyl lysine isopeptide (Lys-Gly) (interchain with G-Cter in SUMO2) cross-link. Positions 482–711 are disordered; it reads PPLEEWPSPA…PGSPEPQVSG (230 aa). Phosphoserine; by GSK3 is present on S489. Over residues 494–503 the composition is skewed to basic and acidic residues; that stretch reads FKEESSHSWE. S522 is modified (phosphoserine). The segment covering 583–592 has biased composition (polar residues); the sequence is DPASQLSYSQ. Position 611 is a phosphothreonine; by CDK1 (T611). A phosphothreonine mark is found at T620, T627, and T662. S693 carries the post-translational modification Phosphoserine; by CDK1. 2 positions are modified to phosphoserine; by PLK1: S730 and S739.

Interacts with PINT87aa which is encoded by the circular form of the long non-coding RNA LINC-PINT; the interaction inhibits FOXM1-mediated transcription of PHB2. In terms of processing, phosphorylated in M (mitotic) phase. Phosphorylation by the checkpoint kinase CHEK2 in response to DNA damage increases the FOXM1 protein stability probably stimulating the transcription of genes involved in DNA repair. Phosphorylated by CDK1 in late S and G2 phases, creating docking sites for the POLO box domains of PLK1. Subsequently, PLK1 binds and phosphorylates FOXM1, leading to activation of transcriptional activity and subsequent enhanced expression of key mitotic regulators. Phosphorylated by GSK3B leading to ubiquitination and proteasomal degradation. Ubiquitinated in a FBXW7-dependent manner leading to proteasomal degradation. Expressed in thymus, testis, small intestine, colon followed by ovary. Appears to be expressed only in adult organs containing proliferating/cycling cells or in response to growth factors. Also expressed in epithelial cell lines derived from tumors. Not expressed in resting cells. Isoform 2 is highly expressed in testis.

The protein resides in the nucleus. In terms of biological role, transcription factor regulating the expression of cell cycle genes essential for DNA replication and mitosis. Plays a role in the control of cell proliferation. Also plays a role in DNA break repair, participating in the DNA damage checkpoint response. Promotes transcription of PHB2. In Homo sapiens (Human), this protein is Forkhead box protein M1 (FOXM1).